Here is a 710-residue protein sequence, read N- to C-terminus: MSKQTFTTTFAGKPLVVEVGQVAKQANGATVVRYGDSTVLTAAVMSKKMATGDFFPLQVNYEEKMYAAGKFPGGFMKREGRPSTDATLTARLIDRPIRPMFAEGFRNEVQVINTVLSYDENASAPMAAMFGSSLALSISDIPFNGPIAGVQVGYIDGEFIINPDKEQMEASLLELTVAGSKEAINMVESGAKELSEDIMLEALLKGHQAIQELIAFQEQIVAVVGKEKAEVELLQVDVDLQADIVAKYNAQLQKAVQVEEKKAREAATEAVKEMVKAEYEERYAEDENLATIMRDVAEILEQMEHAEVRRLITEDKIRPDGRKIDEIRPLDAVVDFLPKVHGSGLFTRGQTQALSVLTLAPMGETQIIDGLAPEYKKRFLHHYNFPQYSVGETGRYGAAGRREIGHGALGERALEQVLPSLEEFPYAIRLVAEVLESNGSSSQASICAGTLALMAGGVPIKAPVAGIAMGLISDGTNYTVLTDIQGLEDHFGDMDFKVAGTREGITALQMDIKIAGITPQILEEALAQAKKARFEILDVIEATIAEPRPELAPTAPKIDTIKIDVDKIKVVIGKGGETIDKIIAETGVKIDIDDEGNVSIYSSDQAAIDRTKEIIAGLVREAKVGEVYHAKVVRIEKFGAFVNLFDKTDALVHISEIAWTRTTNVSDVLEVGEDVDVKVIKIDEKGRVDASMKALIPRPPKPEKKEEKHD.

2 residues coordinate Mg(2+): Asp-489 and Asp-495. The region spanning 556 to 615 is the KH domain; that stretch reads PKIDTIKIDVDKIKVVIGKGGETIDKIIAETGVKIDIDDEGNVSIYSSDQAAIDRTKEII. In terms of domain architecture, S1 motif spans 625–693; sequence GEVYHAKVVR…EKGRVDASMK (69 aa). A disordered region spans residues 691-710; sequence SMKALIPRPPKPEKKEEKHD. Residues 700 to 710 are compositionally biased toward basic and acidic residues; sequence PKPEKKEEKHD.

Belongs to the polyribonucleotide nucleotidyltransferase family. It depends on Mg(2+) as a cofactor.

Its subcellular location is the cytoplasm. The catalysed reaction is RNA(n+1) + phosphate = RNA(n) + a ribonucleoside 5'-diphosphate. Involved in mRNA degradation. Catalyzes the phosphorolysis of single-stranded polyribonucleotides processively in the 3'- to 5'-direction. In Streptococcus pyogenes serotype M1, this protein is Polyribonucleotide nucleotidyltransferase.